We begin with the raw amino-acid sequence, 505 residues long: MEELQGHRELDRSWQHNFLYPLIFQEYIYTFAYDHGLNKLILLENVVDQKYSLLTVKRLITRLYQQNHLIFSANDSNQNEIFGHKHKKNLYSQMITEGFAVIVEIPFSLLLISSLDGKEKKIVKSPNLQSIHSIFPFLEDKFLYLNYVLDILIPYPAHLEILVQTLRYWLKDASSLHLLRFFLYECRNWTSRITSKESISFXKTRNRRLFLFLYNFYVCEYESFFVILRNQSSYLRSTSFGALLERIHFYRKFKYLVKVKACAVILCFFKEPFPHYVRYQGKALLASKGTSLLMHKWKYYFISFWQCYFSVWSQPRRIYINQLSNYSLDFMGFLSSVRFNSSVIRSQMLENSFLLENIPNKFRSMGPISPLSGSLAKPKFWTELGHPIGKSVWTGLSDSDIIDRFGRICRNLSHYYSGSSRKKNLYRIKYILRLSCARTLSRKHKSTVRAFLKRLGSEFLEEFFTEEGKFLSLILPRDFSTSGGLYKGRVWYLDIICIHNLVNDQ.

The protein belongs to the intron maturase 2 family. MatK subfamily.

The protein localises to the plastid. The protein resides in the chloroplast. Usually encoded in the trnK tRNA gene intron. Probably assists in splicing its own and other chloroplast group II introns. The sequence is that of Maturase K from Gomphrena haageana (Haage's globe-amaranth).